The sequence spans 228 residues: Urease accessory protein UreF (228 aa).

The protein belongs to the UreF family. As to quaternary structure, ureD, UreF and UreG form a complex that acts as a GTP-hydrolysis-dependent molecular chaperone, activating the urease apoprotein by helping to assemble the nickel containing metallocenter of UreC. The UreE protein probably delivers the nickel.

It is found in the cytoplasm. In terms of biological role, required for maturation of urease via the functional incorporation of the urease nickel metallocenter. In Lachnoclostridium phytofermentans (strain ATCC 700394 / DSM 18823 / ISDg) (Clostridium phytofermentans), this protein is Urease accessory protein UreF.